Consider the following 90-residue polypeptide: MQEKELSNNFLEEQNTFKEDNSPFSDIKYICQASLLITDSIRKGYDVTQLSNGDINVTEIRIVNVHYNWNSEKGKFVKTNQIEFNNNKGG.

This is an uncharacterized protein from Rickettsia prowazekii (strain Madrid E).